Consider the following 293-residue polypeptide: 4-diphosphocytidyl-2-C-methyl-D-erythritol kinase (293 aa).

Residue Lys-23 is part of the active site. Residue 109–119 (PVAAGIGGGSA) coordinates ATP. Asp-151 is a catalytic residue.

The protein belongs to the GHMP kinase family. IspE subfamily.

The catalysed reaction is 4-CDP-2-C-methyl-D-erythritol + ATP = 4-CDP-2-C-methyl-D-erythritol 2-phosphate + ADP + H(+). It participates in isoprenoid biosynthesis; isopentenyl diphosphate biosynthesis via DXP pathway; isopentenyl diphosphate from 1-deoxy-D-xylulose 5-phosphate: step 3/6. Its function is as follows. Catalyzes the phosphorylation of the position 2 hydroxy group of 4-diphosphocytidyl-2C-methyl-D-erythritol. This Rhizorhabdus wittichii (strain DSM 6014 / CCUG 31198 / JCM 15750 / NBRC 105917 / EY 4224 / RW1) (Sphingomonas wittichii) protein is 4-diphosphocytidyl-2-C-methyl-D-erythritol kinase.